Here is a 140-residue protein sequence, read N- to C-terminus: Profilin-2 (140 aa).

N-acetylalanine is present on alanine 2.

Belongs to the profilin family. In terms of assembly, occurs in many kinds of cells as a complex with monomeric actin in a 1:1 ratio. Interacts with PFN2. Interacts with ACTMAP (via N-terminus); the interaction may facilitate efficient cleavage of the acetylated N-terminus of immature actin by ACTMAP.

The protein localises to the cytoplasm. It is found in the cytoskeleton. Functionally, binds to actin and affects the structure of the cytoskeleton. At high concentrations, profilin prevents the polymerization of actin, whereas it enhances it at low concentrations. By binding to PIP2, it inhibits the formation of IP3 and DG. This is Profilin-2 (Pfn2) from Rattus norvegicus (Rat).